The following is a 187-amino-acid chain: Tetraheme c-type cytochrome CymA (187 aa).

The Cytoplasmic segment spans residues 1–12 (MNWRALFKPSAK). The helical transmembrane segment at 13 to 33 (YSILALLVVGIVIGVVGYFAT) threads the bilayer. Residues 34 to 187 (QQTLHATSTD…KGVAHPYPKG (154 aa)) are Periplasmic-facing. Positions 46, 49, 64, 75, 78, 79, 97, 136, 139, 140, 173, 176, 177, and 182 each coordinate heme c.

Belongs to the NapC/NirT/NrfH family. As to quaternary structure, homodimer. Heme c serves as cofactor.

It localises to the cell inner membrane. It catalyses the reaction a quinol + 2 Fe(III)-[cytochrome c](out) = a quinone + 2 Fe(II)-[cytochrome c](out) + 2 H(+)(out). Spectroscopic studies suggest that CymA requires a non-heme cofactor for quinol oxidation. Quinol dehydrogenase involved in several anaerobic electron transfer pathways. Acquires electrons from the membrane quinone pool and mediates their transfer to several periplasmic terminal reductases and redox shuttles, including the fumarate reductase FccA, the small tetraheme cytochrome (STC), the c-type cytochrome MtrA, the nitrate reductase NapA (either through NapB or directly), the nitrite reductase NrfA and probably also the DmsE subunit of dimethyl sulfoxide (DMSO) reductase. Required for growth on fumarate and on DMSO, and for the reduction of iron(III), manganese(IV), nitrite and nitrate. Not essential for growth on trimethylamine-N-oxide (TMAO). In Shewanella oneidensis (strain ATCC 700550 / JCM 31522 / CIP 106686 / LMG 19005 / NCIMB 14063 / MR-1), this protein is Tetraheme c-type cytochrome CymA.